The primary structure comprises 212 residues: Large ribosomal subunit protein uL3 (212 aa).

Residues 119–147 (YQGNIKRWGQSRGPETHGSRYHRIPGSMG) form a disordered region.

It belongs to the universal ribosomal protein uL3 family. Part of the 50S ribosomal subunit. Forms a cluster with proteins L14 and L19.

In terms of biological role, one of the primary rRNA binding proteins, it binds directly near the 3'-end of the 23S rRNA, where it nucleates assembly of the 50S subunit. The polypeptide is Large ribosomal subunit protein uL3 (Lactobacillus acidophilus (strain ATCC 700396 / NCK56 / N2 / NCFM)).